We begin with the raw amino-acid sequence, 1728 residues long: Lysophospholipase NTE1 (1728 aa).

The Cytoplasmic segment spans residues Met1–Lys44. The chain crosses the membrane as a helical span at residues Ala45 to Ile65. The Lumenal portion of the chain corresponds to Ser66–His97. Residues Ile98–Ser118 traverse the membrane as a helical segment. Over Tyr119 to Ile1728 the chain is Cytoplasmic. The span at Ser141–Ser150 shows a compositional bias: low complexity. Disordered regions lie at residues Ser141–Arg167, Arg285–Thr368, Asn406–Ser436, Thr454–Pro488, Asn596–Arg660, and Ala687–Phe756. The segment covering Leu153–Thr162 has biased composition (basic and acidic residues). Polar residues-rich tracts occupy residues Ser293–Asp303 and Met326–Pro336. Acidic residues predominate over residues Ser345–Ser367. Polar residues-rich tracts occupy residues Asn406–Asn424, Thr454–Ile479, and Lys599–Leu609. Low complexity predominate over residues Thr610 to Gln628. Polar residues-rich tracts occupy residues Glu642 to Thr657 and Ile729 to Phe756. Residues Ser854–Leu987 and Ser983–Lys1121 each bind a nucleoside 3',5'-cyclic phosphate. The tract at residues Pro1034 to Asp1055 is disordered. Residues Leu1036 to Glu1049 show a composition bias toward acidic residues. In terms of domain architecture, PNPLA spans Leu1422–Lys1586. The GXGXXG signature appears at Gly1426 to Gly1431. Residues Gly1453–Gly1457 carry the GXSXG motif. The active-site Nucleophile is Ser1455. Asp1573 acts as the Proton acceptor in catalysis. A DGA/G motif is present at residues Asp1573–Gly1575.

The protein belongs to the NTE family.

It localises to the endoplasmic reticulum membrane. It catalyses the reaction a 1-acyl-sn-glycero-3-phosphocholine + H2O = sn-glycerol 3-phosphocholine + a fatty acid + H(+). Its activity is regulated as follows. Inhibited by organophosphorus esters. Its function is as follows. Intracellular phospholipase B that catalyzes the double deacylation of phosphatidylcholine (PC) to glycerophosphocholine (GroPCho). Plays an important role in membrane lipid homeostasis. Responsible for the rapid PC turnover in response to inositol, elevated temperatures, or when choline is present in the growth medium. The polypeptide is Lysophospholipase NTE1 (NTE1) (Candida glabrata (strain ATCC 2001 / BCRC 20586 / JCM 3761 / NBRC 0622 / NRRL Y-65 / CBS 138) (Yeast)).